A 211-amino-acid chain; its full sequence is Transcription antitermination protein NusB (211 aa).

A disordered region spans residues 152 to 211 (PAKKERVANPFPSTPPKKPENVPNPFSTPFKKNSSEPIRNPFEGNKSPQPPQKTLRRKKK). The segment covering 175–188 (NPFSTPFKKNSSEP) has biased composition (polar residues).

This sequence belongs to the NusB family.

In terms of biological role, involved in transcription antitermination. Required for transcription of ribosomal RNA (rRNA) genes. Binds specifically to the boxA antiterminator sequence of the ribosomal RNA (rrn) operons. The chain is Transcription antitermination protein NusB from Chloroherpeton thalassium (strain ATCC 35110 / GB-78).